We begin with the raw amino-acid sequence, 330 residues long: ADP-L-glycero-D-manno-heptose-6-epimerase (330 aa).

Residues 11-12, 32-33, Q39, Q54, 75-79, and N92 each bind NADP(+); these read FI, DD, and QGACA. The active-site Proton acceptor is Y139. K143 is an NADP(+) binding site. N168 serves as a coordination point for substrate. The NADP(+) site is built by V169 and K177. The Proton acceptor role is filled by K177. Substrate is bound by residues R179, H186, 200 to 203, R213, and Y292; that span reads FGEH.

This sequence belongs to the NAD(P)-dependent epimerase/dehydratase family. HldD subfamily. Homopentamer. NADP(+) is required as a cofactor.

The enzyme catalyses ADP-D-glycero-beta-D-manno-heptose = ADP-L-glycero-beta-D-manno-heptose. It participates in nucleotide-sugar biosynthesis; ADP-L-glycero-beta-D-manno-heptose biosynthesis; ADP-L-glycero-beta-D-manno-heptose from D-glycero-beta-D-manno-heptose 7-phosphate: step 4/4. Its function is as follows. Catalyzes the interconversion between ADP-D-glycero-beta-D-manno-heptose and ADP-L-glycero-beta-D-manno-heptose via an epimerization at carbon 6 of the heptose. The sequence is that of ADP-L-glycero-D-manno-heptose-6-epimerase from Pseudomonas paraeruginosa (strain DSM 24068 / PA7) (Pseudomonas aeruginosa (strain PA7)).